The following is a 336-amino-acid chain: MKDRYILAVESSCDETSVAILKNDKELLANIIASQVESHKRFGGVVPEVASRHHVEVVTTCFEDALQEAGIVASDLDAVAVTYGPGLVGALLVGMAAAKAFAWANKLPLIPVNHMAGHLMAARDVKELQYPLLALLVSGGHTELVYVSEPGDYKIVGETRDDAVGEAYDKVGRVMGLTYPAGREIDQLAHKGQDTYHFPRAMIKEDHLEFSFSGLKSAFINLHHNAEQKGEALVLEDLCASFQAAVLDILLAKTQKALLKHPVKTLVVAGGVAANQGLRERLATDISPDIDVVIPPLRLCGDNAGMIALAAAIEFEKENFASLKLNAKPSLAFESL.

Fe cation is bound by residues His114 and His118. Substrate-binding positions include 136–140 (LVSGG), Asp169, Gly182, Asp186, and Asn275. Asp302 contacts Fe cation.

This sequence belongs to the KAE1 / TsaD family. The cofactor is Fe(2+).

The protein localises to the cytoplasm. The enzyme catalyses L-threonylcarbamoyladenylate + adenosine(37) in tRNA = N(6)-L-threonylcarbamoyladenosine(37) in tRNA + AMP + H(+). Its function is as follows. Required for the formation of a threonylcarbamoyl group on adenosine at position 37 (t(6)A37) in tRNAs that read codons beginning with adenine. Is involved in the transfer of the threonylcarbamoyl moiety of threonylcarbamoyl-AMP (TC-AMP) to the N6 group of A37, together with TsaE and TsaB. TsaD likely plays a direct catalytic role in this reaction. The sequence is that of tRNA N6-adenosine threonylcarbamoyltransferase from Streptococcus agalactiae serotype Ia (strain ATCC 27591 / A909 / CDC SS700).